We begin with the raw amino-acid sequence, 1088 residues long: MSSVSIQIPLPTPPPTQAHNSQTFCAPPLGSLTLPEVFDWHSKNSPNHPLYSYINIDGSIRTITWAESVRAVHRAARRMRTELGLSSDSVPDLTAGKPVVGILAVLDSITYSTLVTGVQYAGFTPFPISPRNSHAAVVHLINKAFVSHIIVEESCRGLLEDAFQSLKSDLTSPSMPTTSVAPVFEDLYVSSDSAQGEASVAFETPAWDSNAIIIHSSGSTAFPKPIAWTHGRAMQLSTVPWYGERDLTGKRMACHAMPMYHTMGYLLLAWAASSGLVLNGFRPQSPATKSTIENVFSASLEAHSDIIFTVPSFVEAWSKNPAYVKTLAELDGVMFGGGPLGKQVGDVLVSANVTLFNLYGSTEAGVLSSTVPADFNIDWEYFRISDIAKVAFVPNEENKLELVVLSSNLNTPSVFNAVYEDVPAYATSDLFEPHPTKPGYWKIFGRTDDQIMHSTGEKTNPGPLEHILNQDPHVRASLMFGRGQFQAGVLVDPTSEYRFDPSDEEKLAEFRNLIWPSVEEMNAYAPQHSRVFKEMILVSSPSKPFTFTAKNSVRRQAVIQEYDDEIKAIYFAVDETGRADIPSPTAWDSAKTLGFIRAVVQKVMKKEVQDGDDFFQHGCDSLQATWIRNTILRSLKDSTDANTQDISNSFIYQHPSVASLASFVSSVAQGQNNINSGLDRAQEMNIMVARYSKDFPPHVPSAPQPSKDTILLTGSTGALGSNILALLIASPSVARIYAFNRKSRSSIPLLDRQKSALLERGLDPSLAASKKVVLVEGDVTKQDLGISTELLSEIRVSITHIIHNAWPVNFNLSLESFEPQVKGLRHLVDLSLSSPHPSPPRVLFTASIGMFNDITRAEPVKEVPIGANVAVSNGYGESKWVGETILAEAAKQTPLRSTSIRVGQLSGGINGAWTTAEWLPSLVRSAIHLKALPDCEGDVSWIPVNVAAAAIVDFCQSDSSIMNLVHPRPATWSSIFSAFASVLNIPLVPYTEWLALLRKSAEDAGDAPDADSLQQNPGLRLLDWYHSAFVHENDSAYQYADTMGFPKFDMTNSLRASGTLADEGLPQLGESDVKLWVDYWKKVGFFPA.

The segment at 1-22 (MSSVSIQIPLPTPPPTQAHNSQ) is disordered. The segment at 38–451 (FDWHSKNSPN…KIFGRTDDQI (414 aa)) is adenylation (A) domain. AMP contacts are provided by residues His261, 357–358 (NL), Thr362, and 443–446 (IFGR). Residues 586 to 668 (AWDSAKTLGF…SLASFVSSVA (83 aa)) form the Carrier domain. At Ser621 the chain carries O-(pantetheine 4'-phosphoryl)serine. The interval 712–951 (LTGSTGALGS…IPVNVAAAAI (240 aa)) is reductase (R) domain. NADP(+) is bound by residues 716 to 719 (TGAL), 804 to 806 (NAW), Tyr875, and Lys879.

It belongs to the adenylate-forming reductase family.

Functionally, adenylate-forming reductase, a natural product biosynthesis enzyme that resembles non-ribosomal peptide synthetases, yet serves to modify one substrate, rather than to condense two or more building blocks. The A-domain preferentially accepts phenylpyruvic acid and benzoic acid as substrate. The natural product of the enzyme is not yet known. This is Adenylate-forming reductase Nps10 from Heterobasidion annosum (Root rot fungus).